Consider the following 55-residue polypeptide: Large ribosomal subunit protein bL33m (55 aa).

Belongs to the bacterial ribosomal protein bL33 family. In terms of assembly, component of the mitochondrial large ribosomal subunit (mt-LSU). Mature yeast 74S mitochondrial ribosomes consist of a small (37S) and a large (54S) subunit. The 37S small subunit contains a 15S ribosomal RNA (15S mt-rRNA) and at least 32 different proteins. The 54S large subunit contains a 21S rRNA (21S mt-rRNA) and at least 45 different proteins. bL33m stabilizes the tRNA acceptor stem in the E-site.

The protein localises to the mitochondrion. Component of the mitochondrial ribosome (mitoribosome), a dedicated translation machinery responsible for the synthesis of mitochondrial genome-encoded proteins, including at least some of the essential transmembrane subunits of the mitochondrial respiratory chain. The mitoribosomes are attached to the mitochondrial inner membrane and translation products are cotranslationally integrated into the membrane. The chain is Large ribosomal subunit protein bL33m (mrpl39) from Schizosaccharomyces pombe (strain 972 / ATCC 24843) (Fission yeast).